A 150-amino-acid polypeptide reads, in one-letter code: Large ribosomal subunit protein bL9 (150 aa).

This sequence belongs to the bacterial ribosomal protein bL9 family.

Functionally, binds to the 23S rRNA. In Stenotrophomonas maltophilia (strain R551-3), this protein is Large ribosomal subunit protein bL9.